We begin with the raw amino-acid sequence, 179 residues long: NADH-quinone oxidoreductase subunit I (179 aa).

4Fe-4S ferredoxin-type domains are found at residues 49–79 and 89–118; these read LTRDPDGEERCVACNLCAVACPVACISLQKG and EFFRINFSRCIFCGLCEEACPTSAIQLTPD. The [4Fe-4S] cluster site is built by cysteine 59, cysteine 62, cysteine 65, cysteine 69, cysteine 98, cysteine 101, cysteine 104, and cysteine 108.

Belongs to the complex I 23 kDa subunit family. NDH-1 is composed of 14 different subunits. Subunits NuoA, H, J, K, L, M, N constitute the membrane sector of the complex. [4Fe-4S] cluster serves as cofactor.

It localises to the cell inner membrane. The enzyme catalyses a quinone + NADH + 5 H(+)(in) = a quinol + NAD(+) + 4 H(+)(out). Functionally, NDH-1 shuttles electrons from NADH, via FMN and iron-sulfur (Fe-S) centers, to quinones in the respiratory chain. The immediate electron acceptor for the enzyme in this species is believed to be ubiquinone. Couples the redox reaction to proton translocation (for every two electrons transferred, four hydrogen ions are translocated across the cytoplasmic membrane), and thus conserves the redox energy in a proton gradient. This is NADH-quinone oxidoreductase subunit I from Chromohalobacter salexigens (strain ATCC BAA-138 / DSM 3043 / CIP 106854 / NCIMB 13768 / 1H11).